Reading from the N-terminus, the 355-residue chain is Phosphoribosylformylglycinamidine cyclo-ligase (355 aa).

It belongs to the AIR synthase family.

The protein localises to the cytoplasm. It catalyses the reaction 2-formamido-N(1)-(5-O-phospho-beta-D-ribosyl)acetamidine + ATP = 5-amino-1-(5-phospho-beta-D-ribosyl)imidazole + ADP + phosphate + H(+). Its pathway is purine metabolism; IMP biosynthesis via de novo pathway; 5-amino-1-(5-phospho-D-ribosyl)imidazole from N(2)-formyl-N(1)-(5-phospho-D-ribosyl)glycinamide: step 2/2. In Methylobacterium sp. (strain 4-46), this protein is Phosphoribosylformylglycinamidine cyclo-ligase.